Here is a 548-residue protein sequence, read N- to C-terminus: Glutamate--tRNA ligase (548 aa).

Positions 102–112 (PSPSGPLHIGH) match the 'HIGH' region motif.

It belongs to the class-I aminoacyl-tRNA synthetase family. Glutamate--tRNA ligase type 2 subfamily.

The protein localises to the cytoplasm. The enzyme catalyses tRNA(Glu) + L-glutamate + ATP = L-glutamyl-tRNA(Glu) + AMP + diphosphate. In terms of biological role, catalyzes the attachment of glutamate to tRNA(Glu) in a two-step reaction: glutamate is first activated by ATP to form Glu-AMP and then transferred to the acceptor end of tRNA(Glu). The sequence is that of Glutamate--tRNA ligase from Thermoplasma acidophilum (strain ATCC 25905 / DSM 1728 / JCM 9062 / NBRC 15155 / AMRC-C165).